Reading from the N-terminus, the 349-residue chain is Protein-glutamate methylesterase/protein-glutamine glutaminase 2 (349 aa).

One can recognise a Response regulatory domain in the interval 4–121 (SVLVVDDSAL…AEGMQAYAEE (118 aa)). A 4-aspartylphosphate modification is found at aspartate 55. The CheB-type methylesterase domain occupies 151–343 (LLSTEKIIAL…AALLQQAARR (193 aa)). Active-site residues include serine 163, histidine 189, and aspartate 285.

It belongs to the CheB family. Interacts with the C-terminal pentapeptide GWEEF of McpB. Phosphorylated by CheA. Phosphorylation of the N-terminal regulatory domain activates the methylesterase activity.

It localises to the cytoplasm. The catalysed reaction is [protein]-L-glutamate 5-O-methyl ester + H2O = L-glutamyl-[protein] + methanol + H(+). It carries out the reaction L-glutaminyl-[protein] + H2O = L-glutamyl-[protein] + NH4(+). Functionally, involved in chemotaxis. Part of a chemotaxis signal transduction system that modulates chemotaxis in response to various stimuli. Catalyzes the demethylation of specific methylglutamate residues introduced into the chemoreceptors (methyl-accepting chemotaxis proteins or MCP) by CheR. Also mediates the irreversible deamidation of specific glutamine residues to glutamic acid. Acts on the methyl-accepting chemotaxis protein McpB. May be involved in a specific chemotactic response, which takes place during infection and is required for P.aeruginosa pathogenicity. The sequence is that of Protein-glutamate methylesterase/protein-glutamine glutaminase 2 from Pseudomonas aeruginosa (strain ATCC 15692 / DSM 22644 / CIP 104116 / JCM 14847 / LMG 12228 / 1C / PRS 101 / PAO1).